Here is a 284-residue protein sequence, read N- to C-terminus: NAD(P)H-hydrate epimerase (284 aa).

The transit peptide at 1–55 (MSGLRTLLGLGLLVSSSRFPRVVARGGPRCPGPAWWAARPMHLGDSTMAGGTVKY) directs the protein to the mitochondrion. In terms of domain architecture, YjeF N-terminal spans 61 to 271 (AQAVDEELFN…DLEKKYQLNL (211 aa)). 115–119 (NNGGD) is a (6S)-NADPHX binding site. Asn116 contacts K(+). Position 140 is an N6-succinyllysine (Lys140). Asp181 contributes to the K(+) binding site. (6S)-NADPHX contacts are provided by residues 185–191 (GFSFKGA) and Asp214. Position 217 (Ser217) interacts with K(+).

This sequence belongs to the NnrE/AIBP family. In terms of assembly, homodimer. Interacts with APOA1 and APOA2. K(+) serves as cofactor. In terms of processing, undergoes physiological phosphorylation during sperm capacitation, downstream to PKA activation.

It is found in the mitochondrion. Its subcellular location is the secreted. It catalyses the reaction (6R)-NADHX = (6S)-NADHX. It carries out the reaction (6R)-NADPHX = (6S)-NADPHX. In terms of biological role, catalyzes the epimerization of the S- and R-forms of NAD(P)HX, a damaged form of NAD(P)H that is a result of enzymatic or heat-dependent hydration. This is a prerequisite for the S-specific NAD(P)H-hydrate dehydratase to allow the repair of both epimers of NAD(P)HX. Accelerates cholesterol efflux from endothelial cells to high-density lipoprotein (HDL) and thereby regulates angiogenesis. This is NAD(P)H-hydrate epimerase from Monodelphis domestica (Gray short-tailed opossum).